The primary structure comprises 592 residues: Testis-specific serine kinase substrate (592 aa).

Serine 217 carries the phosphoserine modification. Residues 232-308 (QDETPRRQEA…VPAGWGMGPR (77 aa)) are disordered. A compositionally biased stretch (basic and acidic residues) spans 234–264 (ETPRRQEAELQEPEEKQEPEEKQEPEEKQKP). A compositionally biased stretch (polar residues) spans 269–281 (SWNSLGPAATSQG). Serine 288 bears the Phosphoserine; by TSSK1 and TSSK2 mark. Serine 316 is modified (phosphoserine). The interval 566-592 (LEGSTGTMGGGSSAGTPPKQGGSAPEQ) is disordered.

In terms of processing, phosphorylated on serine residue(s) by STK22A/TSSK1 and STK22B/TSSK2. As to expression, highly expressed in testis. Expressed at low levels in prostate, female breast, placenta, ovary and thymus.

Its subcellular location is the cytoplasm. The protein localises to the cytoskeleton. The protein resides in the microtubule organizing center. It localises to the centrosome. It is found in the centriole. Functionally, may play a role in testicular physiology, most probably in the process of spermatogenesis or spermatid development. The chain is Testis-specific serine kinase substrate (TSKS) from Homo sapiens (Human).